A 274-amino-acid polypeptide reads, in one-letter code: Nitrogenase iron protein (274 aa).

8–15 (GKGGIGKS) lines the ATP pocket. Cysteine 94 lines the [4Fe-4S] cluster pocket. Arginine 97 carries the post-translational modification ADP-ribosylarginine; by dinitrogenase reductase ADP-ribosyltransferase. Cysteine 131 lines the [4Fe-4S] cluster pocket.

The protein belongs to the NifH/BchL/ChlL family. Homodimer. [4Fe-4S] cluster is required as a cofactor. In terms of processing, the reversible ADP-ribosylation of Arg-97 inactivates the nitrogenase reductase and regulates nitrogenase activity.

The catalysed reaction is N2 + 8 reduced [2Fe-2S]-[ferredoxin] + 16 ATP + 16 H2O = H2 + 8 oxidized [2Fe-2S]-[ferredoxin] + 2 NH4(+) + 16 ADP + 16 phosphate + 6 H(+). In terms of biological role, the key enzymatic reactions in nitrogen fixation are catalyzed by the nitrogenase complex, which has 2 components: the iron protein and the molybdenum-iron protein. The chain is Nitrogenase iron protein from Dehalococcoides mccartyi (strain ATCC BAA-2266 / KCTC 15142 / 195) (Dehalococcoides ethenogenes (strain 195)).